A 207-amino-acid chain; its full sequence is dTTP/UTP pyrophosphatase (207 aa).

The active-site Proton acceptor is D79.

Belongs to the Maf family. YhdE subfamily. Requires a divalent metal cation as cofactor.

Its subcellular location is the cytoplasm. It catalyses the reaction dTTP + H2O = dTMP + diphosphate + H(+). The enzyme catalyses UTP + H2O = UMP + diphosphate + H(+). Nucleoside triphosphate pyrophosphatase that hydrolyzes dTTP and UTP. May have a dual role in cell division arrest and in preventing the incorporation of modified nucleotides into cellular nucleic acids. The protein is dTTP/UTP pyrophosphatase of Nitrobacter winogradskyi (strain ATCC 25391 / DSM 10237 / CIP 104748 / NCIMB 11846 / Nb-255).